Reading from the N-terminus, the 351-residue chain is Protein-glutamate methylesterase/protein-glutamine glutaminase 2 (351 aa).

Residues 4–121 (KVLVVDDSAL…PQDFNEYQDL (118 aa)) enclose the Response regulatory domain. The residue at position 55 (aspartate 55) is a 4-aspartylphosphate. In terms of domain architecture, CheB-type methylesterase spans 156 to 348 (RVINTQLVAI…DKMLNYLASL (193 aa)). Residues serine 168, histidine 194, and aspartate 290 contribute to the active site.

Belongs to the CheB family. Phosphorylated by CheA. Phosphorylation of the N-terminal regulatory domain activates the methylesterase activity.

The protein localises to the cytoplasm. The catalysed reaction is [protein]-L-glutamate 5-O-methyl ester + H2O = L-glutamyl-[protein] + methanol + H(+). The enzyme catalyses L-glutaminyl-[protein] + H2O = L-glutamyl-[protein] + NH4(+). Involved in chemotaxis. Part of a chemotaxis signal transduction system that modulates chemotaxis in response to various stimuli. Catalyzes the demethylation of specific methylglutamate residues introduced into the chemoreceptors (methyl-accepting chemotaxis proteins or MCP) by CheR. Also mediates the irreversible deamidation of specific glutamine residues to glutamic acid. The protein is Protein-glutamate methylesterase/protein-glutamine glutaminase 2 of Shewanella sp. (strain MR-7).